Here is a 275-residue protein sequence, read N- to C-terminus: Exosome complex component Rrp42 (275 aa).

The protein belongs to the RNase PH family. Rrp42 subfamily. Component of the archaeal exosome complex. Forms a hexameric ring-like arrangement composed of 3 Rrp41-Rrp42 heterodimers. The hexameric ring associates with a trimer of Rrp4 and/or Csl4 subunits.

The protein localises to the cytoplasm. Functionally, non-catalytic component of the exosome, which is a complex involved in RNA degradation. Contributes to the structuring of the Rrp41 active site. The polypeptide is Exosome complex component Rrp42 (Saccharolobus islandicus (strain L.S.2.15 / Lassen #1) (Sulfolobus islandicus)).